A 695-amino-acid polypeptide reads, in one-letter code: Threonine--tRNA ligase 1, cytoplasmic (695 aa).

Residues 1–21 form a disordered region; sequence MSEEKASSPSGKMDGEKPLNP. Positions 51 to 115 constitute a TGS domain; the sequence is DSKPIKVTLP…ETDCTLELLK (65 aa). Lysine 215 carries the N6-acetyllysine modification. Threonine 218 is modified (phosphothreonine). Tyrosine 270 bears the Phosphotyrosine mark. A Phosphothreonine modification is found at threonine 425.

This sequence belongs to the class-II aminoacyl-tRNA synthetase family. As to quaternary structure, homodimer. ISGylated.

The protein localises to the cytoplasm. The enzyme catalyses tRNA(Thr) + L-threonine + ATP = L-threonyl-tRNA(Thr) + AMP + diphosphate + H(+). Functionally, catalyzes the attachment of threonine to tRNA(Thr) in a two-step reaction: threonine is first activated by ATP to form Thr-AMP and then transferred to the acceptor end of tRNA(Thr). Also edits incorrectly charged tRNA(Thr) via its editing domain, at the post-transfer stage. In Rattus norvegicus (Rat), this protein is Threonine--tRNA ligase 1, cytoplasmic (Tars1).